Reading from the N-terminus, the 461-residue chain is Coronin-1A (461 aa).

Residue Ser2 is modified to N-acetylserine. The residue at position 2 (Ser2) is a Phosphoserine; by PKC. 7 WD repeats span residues 13–63 (HVFG…LVLP), 73–110 (NVPL…MVWE), 123–160 (PVVT…LVWD), 164–204 (GAAV…RVIE), 207–251 (KGTV…ALWD), 258–296 (PLSL…RYFE), and 302–349 (PFLH…EPIA). Positions 407–418 (NRGLDSARRRAT) are enriched in basic and acidic residues. The tract at residues 407-431 (NRGLDSARRRATPEPSSTLSSDTVS) is disordered. Position 412 is a phosphoserine; by PKC (Ser412). Position 418 is a phosphothreonine (Thr418). Residues 420 to 430 (EPSSTLSSDTV) are compositionally biased toward polar residues. Ser422 carries the phosphoserine modification. Residues 425 to 461 (LSSDTVSRLEEDVRNLNAIVQKLQERLDRLEETVQAK) are a coiled coil.

This sequence belongs to the WD repeat coronin family. Binds actin. In terms of processing, phosphorylation at Ser-412 by PKC strongly down-regulates the association with actin. Polyubiquitinated by RNF128 with 'Lys-48'-linked chains, leading to proteasomal degradation.

The protein resides in the cytoplasm. The protein localises to the cytoskeleton. It is found in the cell cortex. Its subcellular location is the cytoplasmic vesicle. It localises to the phagosome membrane. Functionally, may be a crucial component of the cytoskeleton of highly motile cells, functioning both in the invagination of large pieces of plasma membrane, as well as in forming protrusions of the plasma membrane involved in cell locomotion. The protein is Coronin-1A (Coro1a) of Rattus norvegicus (Rat).